A 128-amino-acid chain; its full sequence is Small ribosomal subunit protein uS11 (128 aa).

This sequence belongs to the universal ribosomal protein uS11 family. Part of the 30S ribosomal subunit. Interacts with proteins S7 and S18. Binds to IF-3.

Its function is as follows. Located on the platform of the 30S subunit, it bridges several disparate RNA helices of the 16S rRNA. Forms part of the Shine-Dalgarno cleft in the 70S ribosome. The polypeptide is Small ribosomal subunit protein uS11 (Vesicomyosocius okutanii subsp. Calyptogena okutanii (strain HA)).